Reading from the N-terminus, the 626-residue chain is Chaperone protein HtpG (626 aa).

Positions 1–339 (MSTNQETRGF…SNDLPLNVSR (339 aa)) are a; substrate-binding. The interval 340–555 (EILQDNKVTA…NDQMTTQMAK (216 aa)) is b. Residues 556–626 (LFAAAGQPVP…FIKRINKLLG (71 aa)) form a c region.

The protein belongs to the heat shock protein 90 family. In terms of assembly, homodimer.

The protein resides in the cytoplasm. Functionally, molecular chaperone. Has ATPase activity. The polypeptide is Chaperone protein HtpG (Aggregatibacter actinomycetemcomitans (Actinobacillus actinomycetemcomitans)).